We begin with the raw amino-acid sequence, 336 residues long: Acetaldehyde dehydrogenase 1 (336 aa).

32–35 (SGVV) is a binding site for NAD(+). Cys150 acts as the Acyl-thioester intermediate in catalysis. NAD(+) is bound at residue Asn309.

It belongs to the acetaldehyde dehydrogenase family.

The enzyme catalyses acetaldehyde + NAD(+) + CoA = acetyl-CoA + NADH + H(+). The sequence is that of Acetaldehyde dehydrogenase 1 (mhpF) from Mycobacterium ulcerans (strain Agy99).